A 311-amino-acid polypeptide reads, in one-letter code: Olfactory receptor 4K1 (311 aa).

Residues 1–25 (MAHTNESMVSEFVLLGLSNSWGLQL) lie on the Extracellular side of the membrane. N-linked (GlcNAc...) asparagine glycosylation is present at Asn5. Residues 26 to 49 (FFFAIFSIVYVTSVLGNVLIIVII) form a helical membrane-spanning segment. Residues 50–57 (SFDSHLNS) lie on the Cytoplasmic side of the membrane. Residues 58–79 (PMYFLLSNLSFIDICQSNFATP) form a helical membrane-spanning segment. Residues 80-100 (KMLVDFFIERKTISFEGCMAQ) lie on the Extracellular side of the membrane. Cys97 and Cys189 form a disulfide bridge. The chain crosses the membrane as a helical span at residues 101-120 (IFVLHSFVGSEMMLLVAMAY). The Cytoplasmic segment spans residues 121-139 (DRFIAICKPLHYSTIMNRR). A helical membrane pass occupies residues 140–158 (LCVIFVSISWAVGVLHSVS). At 159-195 (HLAFTVDLPFCGPNEVDSFFCDLPLVIELACMDTYEM) the chain is on the extracellular side. The helical transmembrane segment at 196-219 (EIMTLTNSGLISLSCFLALIISYT) threads the bilayer. Over 220-235 (IILIGVRCRSSSGSSK) the chain is Cytoplasmic. Residues 236–258 (ALSTLTAHITVVILFFGPCIYFY) form a helical membrane-spanning segment. The Extracellular portion of the chain corresponds to 259–269 (IWPFSRLPVDK). The chain crosses the membrane as a helical span at residues 270–289 (FLSVFYTVCTPLLNPIIYSL). At 290–311 (RNEDVKAAMWKLRNRHVNSWKN) the chain is on the cytoplasmic side.

The protein belongs to the G-protein coupled receptor 1 family.

It localises to the cell membrane. In terms of biological role, odorant receptor. The sequence is that of Olfactory receptor 4K1 (OR4K1) from Homo sapiens (Human).